The primary structure comprises 68 residues: Large ribosomal subunit protein bL35 (68 aa).

Belongs to the bacterial ribosomal protein bL35 family.

The sequence is that of Large ribosomal subunit protein bL35 from Wolbachia pipientis wMel.